The chain runs to 65 residues: Large ribosomal subunit protein bL35 (65 aa).

Over residues 1-16 (MPKQKTHRASAKRFKR) the composition is skewed to basic residues. The interval 1-21 (MPKQKTHRASAKRFKRTGSGG) is disordered.

It belongs to the bacterial ribosomal protein bL35 family.

This Streptococcus pyogenes serotype M18 (strain MGAS8232) protein is Large ribosomal subunit protein bL35.